The following is a 147-amino-acid chain: Small ribosomal subunit protein uS9 (147 aa).

This sequence belongs to the universal ribosomal protein uS9 family.

The protein is Small ribosomal subunit protein uS9 (rps16) of Dictyostelium discoideum (Social amoeba).